We begin with the raw amino-acid sequence, 88 residues long: Cell division topological specificity factor (88 aa).

This sequence belongs to the MinE family.

Functionally, prevents the cell division inhibition by proteins MinC and MinD at internal division sites while permitting inhibition at polar sites. This ensures cell division at the proper site by restricting the formation of a division septum at the midpoint of the long axis of the cell. This is Cell division topological specificity factor from Carboxydothermus hydrogenoformans (strain ATCC BAA-161 / DSM 6008 / Z-2901).